Consider the following 198-residue polypeptide: Putative 3-methyladenine DNA glycosylase (198 aa).

This sequence belongs to the DNA glycosylase MPG family.

This is Putative 3-methyladenine DNA glycosylase from Rhizobium johnstonii (strain DSM 114642 / LMG 32736 / 3841) (Rhizobium leguminosarum bv. viciae).